The primary structure comprises 113 residues: Phosphoribosyl-ATP pyrophosphatase (113 aa).

Belongs to the PRA-PH family.

The protein resides in the cytoplasm. The catalysed reaction is 1-(5-phospho-beta-D-ribosyl)-ATP + H2O = 1-(5-phospho-beta-D-ribosyl)-5'-AMP + diphosphate + H(+). It participates in amino-acid biosynthesis; L-histidine biosynthesis; L-histidine from 5-phospho-alpha-D-ribose 1-diphosphate: step 2/9. This chain is Phosphoribosyl-ATP pyrophosphatase, found in Hydrogenovibrio crunogenus (strain DSM 25203 / XCL-2) (Thiomicrospira crunogena).